We begin with the raw amino-acid sequence, 403 residues long: Phosphoglycerate kinase (403 aa).

Residues 24–26 (DLN), Arg-39, 62–65 (HLGR), Arg-121, and Arg-161 each bind substrate. ATP is bound by residues Lys-211, Gly-299, Glu-330, and 359 to 362 (GGDS).

It belongs to the phosphoglycerate kinase family. Monomer.

Its subcellular location is the cytoplasm. It catalyses the reaction (2R)-3-phosphoglycerate + ATP = (2R)-3-phospho-glyceroyl phosphate + ADP. The protein operates within carbohydrate degradation; glycolysis; pyruvate from D-glyceraldehyde 3-phosphate: step 2/5. The sequence is that of Phosphoglycerate kinase from Rhodococcus erythropolis (strain PR4 / NBRC 100887).